A 442-amino-acid chain; its full sequence is Cyclin-A1-2 (442 aa).

Composition is skewed to polar residues over residues Met1–Asn12 and Ile39–Gly63. The interval Met1–Ala72 is disordered.

The protein belongs to the cyclin family. Cyclin AB subfamily. As to quaternary structure, interacts with CDC20-1, CDC20-2, FZR2/CCS52A1 and FZR1/CCS52A2. Expressed in roots, stems and flowers.

It localises to the cytoplasm. Its subcellular location is the nucleus. Involved in the regulation of male meiosis progression. This is Cyclin-A1-2 (CYCA1-2) from Arabidopsis thaliana (Mouse-ear cress).